Here is a 257-residue protein sequence, read N- to C-terminus: NAD-capped RNA hydrolase NudC (257 aa).

2 residues coordinate substrate: K25 and R69. Residues C98 and C101 each contribute to the Zn(2+) site. Position 111 (E111) interacts with substrate. 2 residues coordinate Zn(2+): C116 and C119. Position 124 (Y124) interacts with substrate. One can recognise a Nudix hydrolase domain in the interval 125–248 (PQIAPCIIVA…TVARRLIEDT (124 aa)). Positions 158, 174, and 178 each coordinate a divalent metal cation. The Nudix box signature appears at 159–180 (GFVEVGETLEQAVAREVMEESG). Substrate is bound at residue 192 to 199 (QPWPFPQS). An a divalent metal cation-binding site is contributed by E219. A substrate-binding site is contributed by A241.

The protein belongs to the Nudix hydrolase family. NudC subfamily. Homodimer. It depends on Mg(2+) as a cofactor. The cofactor is Mn(2+). Zn(2+) is required as a cofactor.

The catalysed reaction is a 5'-end NAD(+)-phospho-ribonucleoside in mRNA + H2O = a 5'-end phospho-adenosine-phospho-ribonucleoside in mRNA + beta-nicotinamide D-ribonucleotide + 2 H(+). It catalyses the reaction NAD(+) + H2O = beta-nicotinamide D-ribonucleotide + AMP + 2 H(+). It carries out the reaction NADH + H2O = reduced beta-nicotinamide D-ribonucleotide + AMP + 2 H(+). In terms of biological role, mRNA decapping enzyme that specifically removes the nicotinamide adenine dinucleotide (NAD) cap from a subset of mRNAs by hydrolyzing the diphosphate linkage to produce nicotinamide mononucleotide (NMN) and 5' monophosphate mRNA. The NAD-cap is present at the 5'-end of some mRNAs and stabilizes RNA against 5'-processing. Has preference for mRNAs with a 5'-end purine. Catalyzes the hydrolysis of a broad range of dinucleotide pyrophosphates. The protein is NAD-capped RNA hydrolase NudC of Escherichia coli O157:H7.